The sequence spans 779 residues: Subtilisin-like protease SBT3.18 (779 aa).

The signal sequence occupies residues 1–21 (MYFWVMFFTLMIKVKLYITNG). A propeptide spans 22–109 (DIFQNRPTVY…VFKSKSLKLH (88 aa)) (activation peptide). The region spanning 30-109 (VYVVYLGANR…VFKSKSLKLH (80 aa)) is the Inhibitor I9 domain. Asn84 carries an N-linked (GlcNAc...) asparagine glycan. A Peptidase S8 domain is found at 113–621 (SWDFLGLAVD…AGHINPLKAM (509 aa)). Residues Asp144 and His221 each act as charge relay system in the active site. 2 N-linked (GlcNAc...) asparagine glycosylation sites follow: Asn236 and Asn406. Ser553 functions as the Charge relay system in the catalytic mechanism.

It belongs to the peptidase S8 family.

It is found in the secreted. This is Subtilisin-like protease SBT3.18 from Arabidopsis thaliana (Mouse-ear cress).